The following is a 203-amino-acid chain: Ras-like protein family member 10A (203 aa).

The small GTPase-like stretch occupies residues 1–203; it reads MGGSLRVAVL…ALHPARCSLM (203 aa). Residue 11-18 participates in GTP binding; sequence GAPGVGKT. The Effector region motif lies at 33-42; the sequence is HRPTDGPRLY. GTP contacts are provided by residues 59-62 and 129-132; these read DGDV and NKRD. At cysteine 200 the chain carries Cysteine methyl ester. Cysteine 200 is lipidated: S-farnesyl cysteine. A propeptide spans 201 to 203 (removed in mature form); the sequence is SLM.

This sequence belongs to the small GTPase superfamily. Ras family. In terms of processing, isoprenylation is essential for nucleolar localization, and the proliferation-inhibiting activity of RASL10A. In terms of tissue distribution, expression appears to be strictly limited to the central nervous system.

Its subcellular location is the cell membrane. The protein localises to the nucleus. The protein resides in the nucleolus. It carries out the reaction GTP + H2O = GDP + phosphate + H(+). Functionally, potent inhibitor of cellular proliferation. This is Ras-like protein family member 10A (RASL10A) from Homo sapiens (Human).